Reading from the N-terminus, the 266-residue chain is MNQPSIPPIEDVQNTPDTRQLAIDKVGIKSIRHPVKVKDKTGGVQHTVATFNMYVYLPHNFKGTHMSRFVEILNNNEREISVESFESILRAMVERLDAESGHVEMTFPYFVNKTAPVSGVQSLSDYEVTFIGEINKGKYDITVKVVVPVTSLCPCSKKISDYGAHNQRSHVTVTALINDFIWVEDIIRMVEDQASCEVYGLLKRPDEKYVTERAYDNPKFVEDIVRDVAAQLNIETRIVSYTVESENFESIHNHSAYALIEKDKRK.

It belongs to the GTP cyclohydrolase IV family.

The enzyme catalyses GTP + H2O = 7,8-dihydroneopterin 3'-triphosphate + formate + H(+). It participates in cofactor biosynthesis; 7,8-dihydroneopterin triphosphate biosynthesis; 7,8-dihydroneopterin triphosphate from GTP: step 1/1. Converts GTP to 7,8-dihydroneopterin triphosphate. This Methylobacillus flagellatus (strain ATCC 51484 / DSM 6875 / VKM B-1610 / KT) protein is GTP cyclohydrolase FolE2.